A 137-amino-acid chain; its full sequence is Immunoglobulin domain-containing protein oig-1 (137 aa).

The N-terminal stretch at 1 to 23 is a signal peptide; sequence MFSELRILRDILLLCFLSVGINA. The Ig-like C2-type domain occupies 41-133; it reads PKISRSSYFK…KGSRVKKFLT (93 aa). Cys63 and Cys118 form a disulfide bridge.

In terms of tissue distribution, expressed in DD and VD GABAergic motor neurons. Expressed in a subset of head neurons including M2 motor neurons in the pharynx. Expressed in coelomocytes.

It localises to the membrane. Its subcellular location is the secreted. It is found in the extracellular space. The protein resides in the cell projection. The protein localises to the dendrite. It localises to the axon. In terms of biological role, plays a role in neural development, where it temporally regulates synapse formation in the D-type inhibitory GABAergic motor neurons, dorsal D (DD) and ventral D (VD) motor neurons. Controls the translocation of postsynaptic proteins, such as the acetylcholine receptor subunit acr-12, and presynaptic proteins, such as snb-1, along nerve cords to prevent premature synapse remodeling/formation. The polypeptide is Immunoglobulin domain-containing protein oig-1 (Caenorhabditis elegans).